The chain runs to 681 residues: DNA ligase (681 aa).

NAD(+) is bound by residues 45–49 (DFDFD), 94–95 (SL), and Glu120. Lys122 (N6-AMP-lysine intermediate) is an active-site residue. Residues Arg143, Glu177, Lys289, and Lys313 each contribute to the NAD(+) site. The Zn(2+) site is built by Cys403, Cys406, Cys421, and Cys426. One can recognise a BRCT domain in the interval 593–681 (SDQQPFAGQS…SLKINFKNTI (89 aa)).

The protein belongs to the NAD-dependent DNA ligase family. LigA subfamily. It depends on Mg(2+) as a cofactor. Requires Mn(2+) as cofactor.

It catalyses the reaction NAD(+) + (deoxyribonucleotide)n-3'-hydroxyl + 5'-phospho-(deoxyribonucleotide)m = (deoxyribonucleotide)n+m + AMP + beta-nicotinamide D-nucleotide.. Its function is as follows. DNA ligase that catalyzes the formation of phosphodiester linkages between 5'-phosphoryl and 3'-hydroxyl groups in double-stranded DNA using NAD as a coenzyme and as the energy source for the reaction. It is essential for DNA replication and repair of damaged DNA. The chain is DNA ligase from Leptospira borgpetersenii serovar Hardjo-bovis (strain JB197).